A 338-amino-acid polypeptide reads, in one-letter code: Tagatose 1,6-diphosphate aldolase (338 aa).

The protein belongs to the aldolase LacD family.

The catalysed reaction is D-tagatofuranose 1,6-bisphosphate = D-glyceraldehyde 3-phosphate + dihydroxyacetone phosphate. Its pathway is carbohydrate metabolism; D-tagatose 6-phosphate degradation; D-glyceraldehyde 3-phosphate and glycerone phosphate from D-tagatose 6-phosphate: step 2/2. This Listeria monocytogenes serotype 4a (strain HCC23) protein is Tagatose 1,6-diphosphate aldolase.